The sequence spans 316 residues: 4-hydroxy-3-methylbut-2-enyl diphosphate reductase (316 aa).

[4Fe-4S] cluster is bound at residue cysteine 12. Positions 43 and 81 each coordinate (2E)-4-hydroxy-3-methylbut-2-enyl diphosphate. Dimethylallyl diphosphate is bound by residues histidine 43 and histidine 81. Residues histidine 43 and histidine 81 each contribute to the isopentenyl diphosphate site. Cysteine 103 is a [4Fe-4S] cluster binding site. Histidine 131 contributes to the (2E)-4-hydroxy-3-methylbut-2-enyl diphosphate binding site. Dimethylallyl diphosphate is bound at residue histidine 131. Histidine 131 contacts isopentenyl diphosphate. The active-site Proton donor is glutamate 133. A (2E)-4-hydroxy-3-methylbut-2-enyl diphosphate-binding site is contributed by threonine 170. Residue cysteine 198 participates in [4Fe-4S] cluster binding. The (2E)-4-hydroxy-3-methylbut-2-enyl diphosphate site is built by serine 226, asparagine 228, and serine 271. Residues serine 226, asparagine 228, and serine 271 each coordinate dimethylallyl diphosphate. Isopentenyl diphosphate-binding residues include serine 226, asparagine 228, and serine 271.

The protein belongs to the IspH family. [4Fe-4S] cluster is required as a cofactor.

The enzyme catalyses isopentenyl diphosphate + 2 oxidized [2Fe-2S]-[ferredoxin] + H2O = (2E)-4-hydroxy-3-methylbut-2-enyl diphosphate + 2 reduced [2Fe-2S]-[ferredoxin] + 2 H(+). It carries out the reaction dimethylallyl diphosphate + 2 oxidized [2Fe-2S]-[ferredoxin] + H2O = (2E)-4-hydroxy-3-methylbut-2-enyl diphosphate + 2 reduced [2Fe-2S]-[ferredoxin] + 2 H(+). The protein operates within isoprenoid biosynthesis; dimethylallyl diphosphate biosynthesis; dimethylallyl diphosphate from (2E)-4-hydroxy-3-methylbutenyl diphosphate: step 1/1. It functions in the pathway isoprenoid biosynthesis; isopentenyl diphosphate biosynthesis via DXP pathway; isopentenyl diphosphate from 1-deoxy-D-xylulose 5-phosphate: step 6/6. Its function is as follows. Catalyzes the conversion of 1-hydroxy-2-methyl-2-(E)-butenyl 4-diphosphate (HMBPP) into a mixture of isopentenyl diphosphate (IPP) and dimethylallyl diphosphate (DMAPP). Acts in the terminal step of the DOXP/MEP pathway for isoprenoid precursor biosynthesis. In Bacillus mycoides (strain KBAB4) (Bacillus weihenstephanensis), this protein is 4-hydroxy-3-methylbut-2-enyl diphosphate reductase.